Reading from the N-terminus, the 130-residue chain is Small ribosomal subunit protein uS9 (130 aa).

This sequence belongs to the universal ribosomal protein uS9 family.

The polypeptide is Small ribosomal subunit protein uS9 (Vibrio campbellii (strain ATCC BAA-1116)).